Reading from the N-terminus, the 545-residue chain is Glucose-6-phosphate isomerase (545 aa).

Catalysis depends on E351, which acts as the Proton donor. Residues H382 and K510 contribute to the active site.

Belongs to the GPI family.

The protein localises to the cytoplasm. It catalyses the reaction alpha-D-glucose 6-phosphate = beta-D-fructose 6-phosphate. It participates in carbohydrate biosynthesis; gluconeogenesis. Its pathway is carbohydrate degradation; glycolysis; D-glyceraldehyde 3-phosphate and glycerone phosphate from D-glucose: step 2/4. Its function is as follows. Catalyzes the reversible isomerization of glucose-6-phosphate to fructose-6-phosphate. This Helicobacter acinonychis (strain Sheeba) protein is Glucose-6-phosphate isomerase.